The sequence spans 186 residues: MKEEEEIGKPAKPKAKKDVAPGRLIDTYAAQCDNCHKWRVIDSQEEYEDIRSKMLEDPFNCQKKQGMSCEEPADIDYDSSRTWVIDKPGLPKTPKGFKRSLVLRKDYSKMDTYYFTPTGKKLRSRNEIAAFVEANPEFRNAPLGDFNFTVPKVMEDTVPPDPKLGSPFPSTTTTTSEKSSVKQSHN.

The segment at 22-77 adopts a CW-type zinc-finger fold; sequence GRLIDTYAAQCDNCHKWRVIDSQEEYEDIRSKMLEDPFNCQKKQGMSCEEPADIDY. Positions 31-69 match the MBD-associated domain (MAD) motif; that stretch reads QCDNCHKWRVIDSQEEYEDIRSKMLEDPFNCQKKQGMSC. The Zn(2+) site is built by Cys-32, Cys-35, Cys-61, and Cys-69. Residues 83-153 form the MBD domain; the sequence is WVIDKPGLPK…GDFNFTVPKV (71 aa). Positions 154–186 are disordered; the sequence is MEDTVPPDPKLGSPFPSTTTTTSEKSSVKQSHN. Over residues 166-178 the composition is skewed to low complexity; that stretch reads SPFPSTTTTTSEK.

As to expression, expressed in rosette leaves, buds, flowers, stems, mature seeds and roots.

It localises to the nucleus. Transcriptional regulator that binds CpG, CpNpN and CpNpG (N is A, T, or C) islands in promoters regardless the DNA methylation status. Plays probably a role in gene silencing. The sequence is that of Methyl-CpG-binding domain-containing protein 4 (MBD4) from Arabidopsis thaliana (Mouse-ear cress).